Here is a 485-residue protein sequence, read N- to C-terminus: NADH-quinone oxidoreductase subunit N (485 aa).

A run of 14 helical transmembrane segments spans residues 8 to 28, 35 to 55, 71 to 91, 105 to 125, 127 to 147, 159 to 179, 203 to 223, 235 to 255, 271 to 291, 297 to 317, 326 to 346, 373 to 393, 408 to 430, and 455 to 475; these read LIAL…MLSI, FLNA…LWFV, GFAM…CTFA, FYLL…ANHL, SLFL…GYAF, YTIL…LVYA, LLAG…LVPF, PAPV…GVVM, VVLA…ALSQ, LLGY…IALQ, VGGY…VVSL, AAVM…LGFI, WWLV…RVAV, and IVVL…QPLI.

This sequence belongs to the complex I subunit 2 family. As to quaternary structure, NDH-1 is composed of 13 different subunits. Subunits NuoA, H, J, K, L, M, N constitute the membrane sector of the complex.

The protein resides in the cell inner membrane. It catalyses the reaction a quinone + NADH + 5 H(+)(in) = a quinol + NAD(+) + 4 H(+)(out). In terms of biological role, NDH-1 shuttles electrons from NADH, via FMN and iron-sulfur (Fe-S) centers, to quinones in the respiratory chain. The immediate electron acceptor for the enzyme in this species is believed to be ubiquinone. Couples the redox reaction to proton translocation (for every two electrons transferred, four hydrogen ions are translocated across the cytoplasmic membrane), and thus conserves the redox energy in a proton gradient. This chain is NADH-quinone oxidoreductase subunit N, found in Shigella boydii serotype 18 (strain CDC 3083-94 / BS512).